Consider the following 319-residue polypeptide: 2-oxoglutarate and iron-dependent oxygenase domain-containing protein 3 (319 aa).

The segment at 1 to 34 (MAPQRRAATKAPEGNGAAERRNRSSTKKDRAPRE) is disordered. At 1-42 (MAPQRRAATKAPEGNGAAERRNRSSTKKDRAPREVQRLWQRP) the chain is on the cytoplasmic side. A compositionally biased stretch (basic and acidic residues) spans 18-34 (AERRNRSSTKKDRAPRE). A helical; Signal-anchor for type II membrane protein transmembrane segment spans residues 43–65 (WLRTAGLGAGFVLTALLLWSSLG). The Lumenal segment spans residues 66-319 (ADDGVAEVLA…DHGIEDPAFP (254 aa)). A Fe2OG dioxygenase domain is found at 207–309 (KPTFFSRINS…AITIAFSCNP (103 aa)). An N-linked (GlcNAc...) asparagine glycan is attached at Asn215. The Fe cation site is built by His230, Asp232, and His288. The active site involves Arg298. Arg298 is a 2-oxoglutarate binding site.

It belongs to the OGFOD3 family. The cofactor is Fe(2+). L-ascorbate is required as a cofactor.

The protein resides in the membrane. In Homo sapiens (Human), this protein is 2-oxoglutarate and iron-dependent oxygenase domain-containing protein 3 (OGFOD3).